A 229-amino-acid polypeptide reads, in one-letter code: Dihydrofolate reductase (229 aa).

One can recognise a DHFR domain in the interval Ser-11–Leu-227. NADP(+) contacts are provided by residues Ala-17 and Gly-23–Gly-29. Position 37-42 (Glu-37–Ala-42) interacts with substrate. Arg-64–Thr-66 serves as a coordination point for NADP(+). Arg-80 serves as a coordination point for substrate. NADP(+)-binding positions include Ser-86–Lys-88 and Gly-127–Ser-134.

It belongs to the dihydrofolate reductase family. As to quaternary structure, monomer.

It catalyses the reaction (6S)-5,6,7,8-tetrahydrofolate + NADP(+) = 7,8-dihydrofolate + NADPH + H(+). It participates in cofactor biosynthesis; tetrahydrofolate biosynthesis; 5,6,7,8-tetrahydrofolate from 7,8-dihydrofolate: step 1/1. In terms of biological role, key enzyme in folate metabolism. Catalyzes an essential reaction for de novo glycine and purine synthesis, and for DNA precursor synthesis. The protein is Dihydrofolate reductase (DFR1) of Cryptococcus neoformans var. neoformans serotype D (strain JEC21 / ATCC MYA-565) (Filobasidiella neoformans).